We begin with the raw amino-acid sequence, 286 residues long: Probable endonuclease 4 (286 aa).

9 residues coordinate Zn(2+): H72, H112, E147, D181, H184, H215, D228, H230, and E260.

The protein belongs to the AP endonuclease 2 family. It depends on Zn(2+) as a cofactor.

It catalyses the reaction Endonucleolytic cleavage to 5'-phosphooligonucleotide end-products.. Functionally, endonuclease IV plays a role in DNA repair. It cleaves phosphodiester bonds at apurinic or apyrimidinic (AP) sites, generating a 3'-hydroxyl group and a 5'-terminal sugar phosphate. The chain is Probable endonuclease 4 from Mycoplasma pneumoniae (strain ATCC 29342 / M129 / Subtype 1) (Mycoplasmoides pneumoniae).